The following is a 183-amino-acid chain: MPIDTVMETLPGYAKDIKLNYSTLVRQNTELTPQQLWGTVVASAIATRNDTLTAAALEDGAQHLSEQALEAARIAAALMSMNNIFYRFQHLSSNEKYATMPARLRMNGMRTHGVEPVDFELWSLAVSAINGCGKCVDSHEKVLREKGAGEDLVLAAVRVASVIHAIGAVLDAEKVHQPEAAMA.

Catalysis depends on Cys-132, which acts as the Proton donor. Cys-132 and Cys-135 are oxidised to a cystine. The active-site Cysteine sulfenic acid (-SOH) intermediate is the Cys-135.

It belongs to the AhpD family.

It carries out the reaction N(6)-[(R)-dihydrolipoyl]-L-lysyl-[lipoyl-carrier protein] + a hydroperoxide = N(6)-[(R)-lipoyl]-L-lysyl-[lipoyl-carrier protein] + an alcohol + H2O. Functionally, antioxidant protein with alkyl hydroperoxidase activity. Required for the reduction of the AhpC active site cysteine residues and for the regeneration of the AhpC enzyme activity. This chain is Alkyl hydroperoxide reductase AhpD, found in Acidobacterium capsulatum (strain ATCC 51196 / DSM 11244 / BCRC 80197 / JCM 7670 / NBRC 15755 / NCIMB 13165 / 161).